Consider the following 234-residue polypeptide: Gem-associated protein 8 (234 aa).

The tract at residues 60 to 116 (LAQSPAAKGGTSPKSRSKSPSASGDACRRRSRPGKPGPQRRSTEKPARFAEDNDSES) is disordered. A compositionally biased stretch (low complexity) spans 67–83 (KGGTSPKSRSKSPSASG). A compositionally biased stretch (basic and acidic residues) spans 100-110 (RSTEKPARFAE). The stretch at 130-153 (ITDELRQYFAETEQHREELRRQHQ) forms a coiled coil.

In terms of assembly, part of the core SMN complex that contains SMN1, GEMIN2/SIP1, DDX20/GEMIN3, GEMIN4, GEMIN5, GEMIN6, GEMIN7, GEMIN8 and STRAP/UNRIP. Part of the SMN-Sm complex that contains SMN1, GEMIN2/SIP1, DDX20/GEMIN3, GEMIN4, GEMIN5, GEMIN6, GEMIN7, GEMIN8, STRAP/UNRIP and the Sm proteins SNRPB, SNRPD1, SNRPD2, SNRPD3, SNRPE, SNRPF and SNRPG. Interacts with GEMIN6; the interaction is direct. Interacts with GEMIN7; the interaction is direct. Interacts with SMN1; the interaction is direct. Interacts with GEMIN4; the interaction is direct.

The protein localises to the nucleus. It is found in the gem. The protein resides in the cytoplasm. Its function is as follows. The SMN complex catalyzes the assembly of small nuclear ribonucleoproteins (snRNPs), the building blocks of the spliceosome, and thereby plays an important role in the splicing of cellular pre-mRNAs. Most spliceosomal snRNPs contain a common set of Sm proteins SNRPB, SNRPD1, SNRPD2, SNRPD3, SNRPE, SNRPF and SNRPG that assemble in a heptameric protein ring on the Sm site of the small nuclear RNA to form the core snRNP (Sm core). In the cytosol, the Sm proteins SNRPD1, SNRPD2, SNRPE, SNRPF and SNRPG are trapped in an inactive 6S pICln-Sm complex by the chaperone CLNS1A that controls the assembly of the core snRNP. To assemble core snRNPs, the SMN complex accepts the trapped 5Sm proteins from CLNS1A forming an intermediate. Binding of snRNA inside 5Sm triggers eviction of the SMN complex, thereby allowing binding of SNRPD3 and SNRPB to complete assembly of the core snRNP. This chain is Gem-associated protein 8 (GEMIN8), found in Bos taurus (Bovine).